We begin with the raw amino-acid sequence, 101 residues long: NADH-quinone oxidoreductase subunit K (101 aa).

The next 3 membrane-spanning stretches (helical) occupy residues 4 to 24, 29 to 49, and 61 to 81; these read VYDY…GIML, IILL…NFIA, and VFVF…LAIV.

This sequence belongs to the complex I subunit 4L family. NDH-1 is composed of 14 different subunits. Subunits NuoA, H, J, K, L, M, N constitute the membrane sector of the complex.

It localises to the cell inner membrane. The catalysed reaction is a quinone + NADH + 5 H(+)(in) = a quinol + NAD(+) + 4 H(+)(out). NDH-1 shuttles electrons from NADH, via FMN and iron-sulfur (Fe-S) centers, to quinones in the respiratory chain. The immediate electron acceptor for the enzyme in this species is believed to be ubiquinone. Couples the redox reaction to proton translocation (for every two electrons transferred, four hydrogen ions are translocated across the cytoplasmic membrane), and thus conserves the redox energy in a proton gradient. This chain is NADH-quinone oxidoreductase subunit K, found in Legionella pneumophila (strain Paris).